Reading from the N-terminus, the 463-residue chain is Glycine--tRNA ligase (463 aa).

Substrate is bound by residues Arg100 and Glu175. ATP is bound by residues 207 to 209 (RNE), 217 to 222 (FRTREF), 291 to 292 (EL), and 335 to 338 (GADR). Residue 222–226 (FEQME) coordinates substrate. 331 to 335 (EPSLG) provides a ligand contact to substrate.

This sequence belongs to the class-II aminoacyl-tRNA synthetase family. As to quaternary structure, homodimer.

The protein resides in the cytoplasm. It catalyses the reaction tRNA(Gly) + glycine + ATP = glycyl-tRNA(Gly) + AMP + diphosphate. Functionally, catalyzes the attachment of glycine to tRNA(Gly). The chain is Glycine--tRNA ligase from Clostridium tetani (strain Massachusetts / E88).